We begin with the raw amino-acid sequence, 414 residues long: Protein MAK11 (414 aa).

An N-acetylserine modification is found at Ser-2. WD repeat units follow at residues 50 to 78 (AHSL…RIYD), 90 to 135 (SHQG…MVWR), 147 to 177 (GHTA…RLWN), 189 to 221 (LRKY…LIYE), 238 to 267 (LMHI…HFYP), and 298 to 330 (GHTN…VVWD). Phosphoserine occurs at positions 376 and 380. Thr-382 carries the post-translational modification Phosphothreonine.

In terms of assembly, associates with 60S pre-ribosomal particles.

The protein localises to the nucleus. It localises to the nucleolus. Its subcellular location is the nucleus membrane. In terms of biological role, essential for cell growth. Plays a role in assembly of 60S pre-ribosomal particles in the nucleolus. Also required for replication of the M1 double-stranded RNA of the L-A virus. This latter function may reflect an enhanced requirement for free 60S ribosomal particles for the translation of viral mRNAs which lack poly-A tails. This is Protein MAK11 (MAK11) from Saccharomyces cerevisiae (strain ATCC 204508 / S288c) (Baker's yeast).